We begin with the raw amino-acid sequence, 355 residues long: MKIVADENLAFTDYFFSEFGDIQHKAGRTLTHTDVQDAEALLVRSVTAVNESLIQNTALKYVGSATIGTDHLDIQALEKQGITWANAAGCNAQAVAEYVITALLHLDASLLEQQEKFTLGIVGLGNVGKRLAYMAQLLGWKVIGFDPFVQLDSIENVSFQTLLQQANAVSIHVPLTKKGEHATYHLFDEKAFAALQPNTILINSARGPVVKEAALIEDIQRTQRKVVLDVFEHEPVISEELLNMLALATPHIAGYSLEGKARGTQMIYEAFCQKFGYDINKRFETQLPACEDYFSRHDLKAVLKQKISQIYDIAQDDANIRACVKEGKVEQKAFDLLRKNYPLRREWAAHGGPQA.

2 residues coordinate substrate: Ser45 and Thr66. An NAD(+)-binding site is contributed by Asp146. The active site involves Arg206. Asp229 is an NAD(+) binding site. Glu234 is an active-site residue. The active-site Proton donor is His251. Residue Gly254 coordinates NAD(+). Position 255 (Tyr255) interacts with substrate.

This sequence belongs to the D-isomer specific 2-hydroxyacid dehydrogenase family. PdxB subfamily. As to quaternary structure, homodimer.

The protein localises to the cytoplasm. It carries out the reaction 4-phospho-D-erythronate + NAD(+) = (R)-3-hydroxy-2-oxo-4-phosphooxybutanoate + NADH + H(+). The protein operates within cofactor biosynthesis; pyridoxine 5'-phosphate biosynthesis; pyridoxine 5'-phosphate from D-erythrose 4-phosphate: step 2/5. In terms of biological role, catalyzes the oxidation of erythronate-4-phosphate to 3-hydroxy-2-oxo-4-phosphonooxybutanoate. The polypeptide is Erythronate-4-phosphate dehydrogenase (Acinetobacter baumannii (strain ATCC 17978 / DSM 105126 / CIP 53.77 / LMG 1025 / NCDC KC755 / 5377)).